The sequence spans 167 residues: Stress-related protein (167 aa).

The protein belongs to the REF/SRPP family.

Its function is as follows. Plays a role in plant defense. In Phaseolus vulgaris (Kidney bean), this protein is Stress-related protein (SRP).